Consider the following 350-residue polypeptide: Histidinol-phosphate aminotransferase (350 aa).

Lys-212 is modified (N6-(pyridoxal phosphate)lysine).

This sequence belongs to the class-II pyridoxal-phosphate-dependent aminotransferase family. Histidinol-phosphate aminotransferase subfamily. In terms of assembly, homodimer. Requires pyridoxal 5'-phosphate as cofactor.

It carries out the reaction L-histidinol phosphate + 2-oxoglutarate = 3-(imidazol-4-yl)-2-oxopropyl phosphate + L-glutamate. Its pathway is amino-acid biosynthesis; L-histidine biosynthesis; L-histidine from 5-phospho-alpha-D-ribose 1-diphosphate: step 7/9. This chain is Histidinol-phosphate aminotransferase, found in Geobacter sulfurreducens (strain ATCC 51573 / DSM 12127 / PCA).